The chain runs to 116 residues: Nucleoid-associated protein Tfu_0045 (116 aa).

Belongs to the YbaB/EbfC family. Homodimer.

It is found in the cytoplasm. Its subcellular location is the nucleoid. Its function is as follows. Binds to DNA and alters its conformation. May be involved in regulation of gene expression, nucleoid organization and DNA protection. This Thermobifida fusca (strain YX) protein is Nucleoid-associated protein Tfu_0045.